The following is a 238-amino-acid chain: ATP synthase subunit a (238 aa).

A run of 5 helical transmembrane segments spans residues 18–38, 76–96, 114–134, 166–186, and 193–213; these read LTLLAVCIVTIAVIFAFVFWA, YSLLLFTIFLFVAVANNLGLF, NLAFDLALSLFITLMVHIEGV, SLAIRLFGNIFAGEVVTGLIV, and VYWWPIAFLVNMAWTAFSVFI.

Belongs to the ATPase A chain family. F-type ATPases have 2 components, CF(1) - the catalytic core - and CF(0) - the membrane proton channel. CF(1) has five subunits: alpha(3), beta(3), gamma(1), delta(1), epsilon(1). CF(0) has three main subunits: a(1), b(2) and c(9-12). The alpha and beta chains form an alternating ring which encloses part of the gamma chain. CF(1) is attached to CF(0) by a central stalk formed by the gamma and epsilon chains, while a peripheral stalk is formed by the delta and b chains.

Its subcellular location is the cell membrane. Functionally, key component of the proton channel; it plays a direct role in the translocation of protons across the membrane. This chain is ATP synthase subunit a, found in Streptococcus pyogenes serotype M49 (strain NZ131).